Reading from the N-terminus, the 342-residue chain is Glucokinase (342 aa).

Position 7–12 (7–12) interacts with ATP; sequence GDIGGT.

This sequence belongs to the bacterial glucokinase family.

The protein localises to the cytoplasm. It catalyses the reaction D-glucose + ATP = D-glucose 6-phosphate + ADP + H(+). This Trichormus variabilis (strain ATCC 29413 / PCC 7937) (Anabaena variabilis) protein is Glucokinase.